Here is a 419-residue protein sequence, read N- to C-terminus: L-rhamnose isomerase (419 aa).

Residues H262, D294, and D296 each contribute to the Mn(2+) site.

The protein belongs to the rhamnose isomerase family. As to quaternary structure, homotetramer. It depends on Mn(2+) as a cofactor.

It is found in the cytoplasm. The catalysed reaction is L-rhamnopyranose = L-rhamnulose. Its pathway is carbohydrate degradation; L-rhamnose degradation; glycerone phosphate from L-rhamnose: step 1/3. Catalyzes the interconversion of L-rhamnose and L-rhamnulose. The protein is L-rhamnose isomerase of Escherichia coli O139:H28 (strain E24377A / ETEC).